We begin with the raw amino-acid sequence, 354 residues long: Uroporphyrinogen decarboxylase (354 aa).

Residues 27–31, D77, Y154, T209, and H327 contribute to the substrate site; that span reads RQAGR.

This sequence belongs to the uroporphyrinogen decarboxylase family. As to quaternary structure, homodimer.

It localises to the cytoplasm. It catalyses the reaction uroporphyrinogen III + 4 H(+) = coproporphyrinogen III + 4 CO2. Its pathway is porphyrin-containing compound metabolism; protoporphyrin-IX biosynthesis; coproporphyrinogen-III from 5-aminolevulinate: step 4/4. Catalyzes the decarboxylation of four acetate groups of uroporphyrinogen-III to yield coproporphyrinogen-III. This is Uroporphyrinogen decarboxylase from Salmonella dublin (strain CT_02021853).